Consider the following 192-residue polypeptide: RNA pyrophosphohydrolase (192 aa).

The 144-residue stretch at 6–149 (GYRPNVGIVI…KKDVYRKVMK (144 aa)) folds into the Nudix hydrolase domain. The Nudix box signature appears at 38–59 (GGINDNETAEQAMYRELYEEAG).

It belongs to the Nudix hydrolase family. RppH subfamily. Requires a divalent metal cation as cofactor.

Functionally, accelerates the degradation of transcripts by removing pyrophosphate from the 5'-end of triphosphorylated RNA, leading to a more labile monophosphorylated state that can stimulate subsequent ribonuclease cleavage. The chain is RNA pyrophosphohydrolase from Histophilus somni (strain 129Pt) (Haemophilus somnus).